Here is a 391-residue protein sequence, read N- to C-terminus: Matrix metalloproteinase-23 (391 aa).

At 1–19 the chain is on the cytoplasmic side; it reads MGWRACLRPEASGAVQGRW. Residues 1–79 constitute a propeptide that is removed on maturation; the sequence is MGWRACLRPE…LSMLVTRRRR (79 aa). Residues 20–38 form a helical; Signal-anchor for type II membrane protein membrane-spanning segment; it reads LGAVLSGLCLLSALAFLEW. Over 39 to 391 the chain is Lumenal; sequence LGSPTETAWN…TYSWRVRVRS (353 aa). 2 N-linked (GlcNAc...) asparagine glycosylation sites follow: N93 and N149. Position 212 (H212) interacts with Zn(2+). E213 is a catalytic residue. Zn(2+)-binding residues include H216 and H222. A glycan (N-linked (GlcNAc...) asparagine) is linked at N233. Residues 256-290 form the ShKT domain; that stretch reads CLDRIFVCTSWARKGFCDVRQRLMKRLCPRSCDFC. Disulfide bonds link C256–C290, C263–C283, and C272–C287. The Ig-like C2-type domain occupies 296–381; sequence PTVATTTSPT…VVRHRQRVLT (86 aa). N317 carries N-linked (GlcNAc...) asparagine glycosylation. A disulfide bridge connects residues C322 and C371.

The protein belongs to the peptidase M10A family. The cofactor is Zn(2+). N-glycosylated. In terms of processing, proteolytic cleavage might yield an active form. In terms of tissue distribution, expressed at the highest levels in ovary and uterus. In ovary expression is strictly confined to granulosa cells of preantral and small antral follicles. Detected also in testis and prostate.

It localises to the membrane. Its subcellular location is the endoplasmic reticulum membrane. Its activity is regulated as follows. Inhibited by TIMP2. Protease. May regulate the surface expression of some potassium channels by retaining them in the endoplasmic reticulum. The protein is Matrix metalloproteinase-23 (Mmp23) of Rattus norvegicus (Rat).